We begin with the raw amino-acid sequence, 352 residues long: C-C chemokine receptor type 5 (352 aa).

At Met1–Ala30 the chain is on the extracellular side. The residue at position 3 (Tyr3) is a Sulfotyrosine. 2 O-linked (GalNAc...) serine glycosylation sites follow: Ser6 and Ser7. Sulfotyrosine occurs at positions 10, 14, and 15. 2 disulfide bridges follow: Cys20-Cys269 and Cys101-Cys178. Residues Arg31–Cys58 form a helical membrane-spanning segment. Residues Lys59–Tyr68 lie on the Cytoplasmic side of the membrane. The helical transmembrane segment at Leu69–Tyr89 threads the bilayer. Residues Ala90–Gln102 lie on the Extracellular side of the membrane. The chain crosses the membrane as a helical span at residues Leu103–Ile124. Residues Asp125 to Thr141 are Cytoplasmic-facing. A helical transmembrane segment spans residues Val142–Phe166. The Extracellular portion of the chain corresponds to Thr167 to Ile198. Residues Val199 to Leu218 form a helical membrane-spanning segment. The Cytoplasmic segment spans residues Lys219–Arg235. The helical transmembrane segment at Leu236–Phe260 threads the bilayer. The Extracellular segment spans residues Gln261–Gln277. Residues Ala278–Gly301 traverse the membrane as a helical segment. Topologically, residues Glu302–Leu352 are cytoplasmic. Residues Cys321, Cys323, and Cys324 are each lipidated (S-palmitoyl cysteine). Phosphoserine; by BARK1 occurs at positions 336, 337, 342, and 349.

Belongs to the G-protein coupled receptor 1 family. In terms of assembly, interacts with PRAF2. Efficient ligand binding to CCL3/MIP-1alpha and CCL4/MIP-1beta requires sulfation, O-glycosylation and sialic acid modifications. Glycosylation on Ser-6 is required for efficient binding of CCL4. Interacts with GRK2. Interacts with ARRB1 and ARRB2. Interacts with CNIH4. Interacts with S100A4; this interaction stimulates T-lymphocyte chemotaxis. Post-translationally, sulfated on at least 2 of the N-terminal tyrosines. Sulfation is required for efficient binding of the chemokines, CCL3 and CCL4. In terms of processing, palmitoylation in the C-terminal is important for cell surface expression. Phosphorylation on serine residues in the C-terminal is stimulated by binding CC chemokines especially by APO-RANTES. Post-translationally, O-glycosylated, but not N-glycosylated. Ser-6 appears to be the major site even if Ser-7 may be also O-glycosylated. Also sialylated glycans present which contribute to chemokine binding. Thr-16 and Ser-17 may also be glycosylated and, if so, with small moieties such as a T-antigen.

It is found in the cell membrane. Functionally, receptor for a number of inflammatory CC-chemokines including CCL3/MIP-1-alpha, CCL4/MIP-1-beta and RANTES and subsequently transduces a signal by increasing the intracellular calcium ion level. May play a role in the control of granulocytic lineage proliferation or differentiation. Participates in T-lymphocyte migration to the infection site by acting as a chemotactic receptor. In Semnopithecus entellus (Northern plains gray langur), this protein is C-C chemokine receptor type 5 (CCR5).